Here is a 202-residue protein sequence, read N- to C-terminus: Josephin-1 (202 aa).

A Phosphoserine modification is found at Ser15. The 180-residue stretch at 23–202 (PPQIYHEKQR…EAHQSWRADV (180 aa)) folds into the Josephin domain. Cys36 functions as the Nucleophile in the catalytic mechanism. His139 (proton acceptor) is an active-site residue.

Interacts with beta-actin/ACTB. Monoubiquitinated. Ubiquitination activates deubiquitination activity in vitro.

Its subcellular location is the cell membrane. The protein resides in the cytoplasm. It carries out the reaction Thiol-dependent hydrolysis of ester, thioester, amide, peptide and isopeptide bonds formed by the C-terminal Gly of ubiquitin (a 76-residue protein attached to proteins as an intracellular targeting signal).. Deubiquitinates monoubiquitinated probes (in vitro). When ubiquitinated, cleaves 'Lys-63'-linked and 'Lys-48'-linked poly-ubiquitin chains (in vitro), hence may act as a deubiquitinating enzyme. May increase macropinocytosis and suppress clathrin- and caveolae-mediated endocytosis. May enhance membrane dynamics and cell motility independently of its catalytic activity. The polypeptide is Josephin-1 (JOSD1) (Bos taurus (Bovine)).